We begin with the raw amino-acid sequence, 338 residues long: Ketol-acid reductoisomerase (NADP(+)) (338 aa).

The KARI N-terminal Rossmann domain maps to 1–181 (MKVFYDKDCD…GGGRAGIIET (181 aa)). Residues 24–27 (YGSQ), Arg-47, and Ser-52 each bind NADP(+). His-107 is a catalytic residue. Gly-133 serves as a coordination point for NADP(+). The KARI C-terminal knotted domain occupies 182-327 (NFREETETDL…AKLRAMMPWI (146 aa)). Asp-190, Glu-194, Glu-226, and Glu-230 together coordinate Mg(2+). Ser-251 is a substrate binding site.

Belongs to the ketol-acid reductoisomerase family. Requires Mg(2+) as cofactor.

The enzyme catalyses (2R)-2,3-dihydroxy-3-methylbutanoate + NADP(+) = (2S)-2-acetolactate + NADPH + H(+). It carries out the reaction (2R,3R)-2,3-dihydroxy-3-methylpentanoate + NADP(+) = (S)-2-ethyl-2-hydroxy-3-oxobutanoate + NADPH + H(+). It functions in the pathway amino-acid biosynthesis; L-isoleucine biosynthesis; L-isoleucine from 2-oxobutanoate: step 2/4. Its pathway is amino-acid biosynthesis; L-valine biosynthesis; L-valine from pyruvate: step 2/4. In terms of biological role, involved in the biosynthesis of branched-chain amino acids (BCAA). Catalyzes an alkyl-migration followed by a ketol-acid reduction of (S)-2-acetolactate (S2AL) to yield (R)-2,3-dihydroxy-isovalerate. In the isomerase reaction, S2AL is rearranged via a Mg-dependent methyl migration to produce 3-hydroxy-3-methyl-2-ketobutyrate (HMKB). In the reductase reaction, this 2-ketoacid undergoes a metal-dependent reduction by NADPH to yield (R)-2,3-dihydroxy-isovalerate. The protein is Ketol-acid reductoisomerase (NADP(+)) of Herminiimonas arsenicoxydans.